Here is a 314-residue protein sequence, read N- to C-terminus: Aspartate carbamoyltransferase catalytic subunit (314 aa).

The carbamoyl phosphate site is built by Arg55 and Thr56. An L-aspartate-binding site is contributed by Lys83. Carbamoyl phosphate-binding residues include Arg105, His139, and Gln142. Residues Arg172 and Arg226 each contribute to the L-aspartate site. Gly267 and Pro268 together coordinate carbamoyl phosphate.

The protein belongs to the aspartate/ornithine carbamoyltransferase superfamily. ATCase family. Heterododecamer (2C3:3R2) of six catalytic PyrB chains organized as two trimers (C3), and six regulatory PyrI chains organized as three dimers (R2).

It carries out the reaction carbamoyl phosphate + L-aspartate = N-carbamoyl-L-aspartate + phosphate + H(+). It participates in pyrimidine metabolism; UMP biosynthesis via de novo pathway; (S)-dihydroorotate from bicarbonate: step 2/3. In terms of biological role, catalyzes the condensation of carbamoyl phosphate and aspartate to form carbamoyl aspartate and inorganic phosphate, the committed step in the de novo pyrimidine nucleotide biosynthesis pathway. In Rhodococcus erythropolis (strain PR4 / NBRC 100887), this protein is Aspartate carbamoyltransferase catalytic subunit.